The sequence spans 536 residues: Cytochrome P450 78A7 (536 aa).

The chain crosses the membrane as a helical span at residues 36 to 56; the sequence is LFLAVVFLSIVTWALAGGGGV. Position 481 (C481) interacts with heme.

The protein belongs to the cytochrome P450 family. It depends on heme as a cofactor.

The protein localises to the membrane. Functionally, functions probably in association with CYP78A5 in regulating relative growth of the shoot apical meristem and plant organs via a non-cell-autonomous signal. In Arabidopsis thaliana (Mouse-ear cress), this protein is Cytochrome P450 78A7 (CYP78A7).